Consider the following 228-residue polypeptide: Somatolactin (228 aa).

A signal peptide spans 1–24 (MFSIRMNKVLQGFVCLMLTHRIVG). Disulfide bonds link Cys-29-Cys-38, Cys-88-Cys-200, and Cys-217-Cys-225. Asn-141 and Asn-177 each carry an N-linked (GlcNAc...) asparagine glycan.

Belongs to the somatotropin/prolactin family.

It is found in the secreted. The polypeptide is Somatolactin (Anguilla anguilla (European freshwater eel)).